The following is a 117-amino-acid chain: Large ribosomal subunit protein bL20c (117 aa).

It belongs to the bacterial ribosomal protein bL20 family.

Its subcellular location is the plastid. It localises to the chloroplast. Binds directly to 23S ribosomal RNA and is necessary for the in vitro assembly process of the 50S ribosomal subunit. It is not involved in the protein synthesizing functions of that subunit. The sequence is that of Large ribosomal subunit protein bL20c from Gossypium hirsutum (Upland cotton).